The following is a 205-amino-acid chain: Probable thymidylate kinase (205 aa).

10-17 serves as a coordination point for ATP; sequence GIDGSGKS.

The protein belongs to the thymidylate kinase family.

It catalyses the reaction dTMP + ATP = dTDP + ADP. The chain is Probable thymidylate kinase from Methanosarcina barkeri (strain Fusaro / DSM 804).